A 125-amino-acid polypeptide reads, in one-letter code: Small ribosomal subunit protein uS11 (125 aa).

The disordered stretch occupies residues 101-125 (KDVKDVTPTPHNGTRPPKKILKREK). The segment covering 116–125 (PPKKILKREK) has biased composition (basic residues).

Belongs to the universal ribosomal protein uS11 family. As to quaternary structure, part of the 30S ribosomal subunit. Interacts with proteins S7 and S18. Binds to IF-3.

In terms of biological role, located on the platform of the 30S subunit, it bridges several disparate RNA helices of the 16S rRNA. Forms part of the Shine-Dalgarno cleft in the 70S ribosome. The sequence is that of Small ribosomal subunit protein uS11 from Mycoplasma sp.